The sequence spans 220 residues: NADH-quinone oxidoreductase subunit B (220 aa).

Residues cysteine 37, cysteine 38, cysteine 103, and cysteine 132 each contribute to the [4Fe-4S] cluster site. Positions 174 to 220 (PSSERYAPKNRSQRKLAERQQAAQRREMGAEKPLGALEERAELNAGR) are disordered. A compositionally biased stretch (basic and acidic residues) spans 210–220 (LEERAELNAGR).

The protein belongs to the complex I 20 kDa subunit family. As to quaternary structure, NDH-1 is composed of 14 different subunits. Subunits NuoB, C, D, E, F, and G constitute the peripheral sector of the complex. The cofactor is [4Fe-4S] cluster.

It is found in the cell membrane. It carries out the reaction a quinone + NADH + 5 H(+)(in) = a quinol + NAD(+) + 4 H(+)(out). Its function is as follows. NDH-1 shuttles electrons from NADH, via FMN and iron-sulfur (Fe-S) centers, to quinones in the respiratory chain. The immediate electron acceptor for the enzyme in this species is believed to be a menaquinone. Couples the redox reaction to proton translocation (for every two electrons transferred, four hydrogen ions are translocated across the cytoplasmic membrane), and thus conserves the redox energy in a proton gradient. The polypeptide is NADH-quinone oxidoreductase subunit B (Saccharopolyspora erythraea (strain ATCC 11635 / DSM 40517 / JCM 4748 / NBRC 13426 / NCIMB 8594 / NRRL 2338)).